Consider the following 211-residue polypeptide: Large ribosomal subunit protein bL9 (211 aa).

Residues 180–211 (DDIGAAGMDDDDDDAPAPAQADPSSEESSEED) are disordered.

It belongs to the bacterial ribosomal protein bL9 family.

Binds to the 23S rRNA. In Jannaschia sp. (strain CCS1), this protein is Large ribosomal subunit protein bL9.